Here is a 117-residue protein sequence, read N- to C-terminus: Small ribosomal subunit protein bS16 (117 aa).

A compositionally biased stretch (basic residues) spans 81–90 (LKKRPNRNNP). The interval 81-117 (LKKRPNRNNPHKGQPGKKAQERISAAKQVAEAESAPV) is disordered.

This sequence belongs to the bacterial ribosomal protein bS16 family.

The polypeptide is Small ribosomal subunit protein bS16 (Bartonella quintana (strain Toulouse) (Rochalimaea quintana)).